The sequence spans 816 residues: Phenylalanine--tRNA ligase beta subunit (816 aa).

The tRNA-binding domain occupies 40 to 148 (FEELAALKTG…EGMAHGQRFI (109 aa)). The B5 domain occupies 401-479 (KAVEVQRFSI…RIYGYDNVPT (79 aa)). Residues aspartate 457, aspartate 463, glutamate 466, and glutamate 467 each coordinate Mg(2+). Residues 721–814 (PVYPAVKRDI…LTDRFGGSFR (94 aa)) enclose the FDX-ACB domain.

The protein belongs to the phenylalanyl-tRNA synthetase beta subunit family. Type 1 subfamily. As to quaternary structure, tetramer of two alpha and two beta subunits. Requires Mg(2+) as cofactor.

The protein resides in the cytoplasm. The catalysed reaction is tRNA(Phe) + L-phenylalanine + ATP = L-phenylalanyl-tRNA(Phe) + AMP + diphosphate + H(+). The protein is Phenylalanine--tRNA ligase beta subunit of Desulfotalea psychrophila (strain LSv54 / DSM 12343).